Reading from the N-terminus, the 795-residue chain is Phenylalanine--tRNA ligase beta subunit (795 aa).

In terms of domain architecture, tRNA-binding spans 39 to 148; the sequence is AGQFHGVVVG…IDAPLGVDLR (110 aa). The B5 domain maps to 401–476; the sequence is PQSATITLRR…RIYGYNNIPD (76 aa). Mg(2+)-binding residues include Asp-454, Asp-460, Glu-463, and Glu-464. An FDX-ACB domain is found at 701–794; it reads SRFPSNRRDI…LKQRFQASLR (94 aa).

The protein belongs to the phenylalanyl-tRNA synthetase beta subunit family. Type 1 subfamily. As to quaternary structure, tetramer of two alpha and two beta subunits. Mg(2+) is required as a cofactor.

The protein resides in the cytoplasm. The catalysed reaction is tRNA(Phe) + L-phenylalanine + ATP = L-phenylalanyl-tRNA(Phe) + AMP + diphosphate + H(+). The sequence is that of Phenylalanine--tRNA ligase beta subunit from Photorhabdus laumondii subsp. laumondii (strain DSM 15139 / CIP 105565 / TT01) (Photorhabdus luminescens subsp. laumondii).